Reading from the N-terminus, the 409-residue chain is Elongation factor Tu, chloroplastic (409 aa).

In terms of domain architecture, tr-type G spans Lys10 to Glu214. The G1 stretch occupies residues Gly19 to Thr26. A GTP-binding site is contributed by Gly19–Thr26. Thr26 is a Mg(2+) binding site. A G2 region spans residues Gly60–Asn64. Residues Asp81 to Gly84 are G3. GTP contacts are provided by residues Asp81 to His85 and Asn136 to Asp139. The G4 stretch occupies residues Asn136–Asp139. Positions Ser174–Leu176 are G5.

It belongs to the TRAFAC class translation factor GTPase superfamily. Classic translation factor GTPase family. EF-Tu/EF-1A subfamily.

The protein localises to the plastid. It localises to the chloroplast. It carries out the reaction GTP + H2O = GDP + phosphate + H(+). Its function is as follows. GTP hydrolase that promotes the GTP-dependent binding of aminoacyl-tRNA to the A-site of ribosomes during protein biosynthesis. The protein is Elongation factor Tu, chloroplastic (tufA) of Trieres chinensis (Marine centric diatom).